Consider the following 260-residue polypeptide: NH(3)-dependent NAD(+) synthetase (260 aa).

31-38 (GLSGGLDS) serves as a coordination point for ATP. Asp-37 serves as a coordination point for Mg(2+). Arg-112 is a deamido-NAD(+) binding site. Thr-132 lines the ATP pocket. Position 137 (Glu-137) interacts with Mg(2+). The ATP site is built by Lys-161 and Ser-183.

The protein belongs to the NAD synthetase family. As to quaternary structure, homodimer.

It carries out the reaction deamido-NAD(+) + NH4(+) + ATP = AMP + diphosphate + NAD(+) + H(+). Its pathway is cofactor biosynthesis; NAD(+) biosynthesis; NAD(+) from deamido-NAD(+) (ammonia route): step 1/1. Its function is as follows. Catalyzes the ATP-dependent amidation of deamido-NAD to form NAD. Uses ammonia as a nitrogen source. This Helicobacter acinonychis (strain Sheeba) protein is NH(3)-dependent NAD(+) synthetase.